The primary structure comprises 147 residues: Large ribosomal subunit protein uL11 (147 aa).

The protein belongs to the universal ribosomal protein uL11 family. As to quaternary structure, part of the ribosomal stalk of the 50S ribosomal subunit. Interacts with L10 and the large rRNA to form the base of the stalk. L10 forms an elongated spine to which L12 dimers bind in a sequential fashion forming a multimeric L10(L12)X complex. One or more lysine residues are methylated.

Forms part of the ribosomal stalk which helps the ribosome interact with GTP-bound translation factors. This Phocaeicola vulgatus (strain ATCC 8482 / DSM 1447 / JCM 5826 / CCUG 4940 / NBRC 14291 / NCTC 11154) (Bacteroides vulgatus) protein is Large ribosomal subunit protein uL11.